We begin with the raw amino-acid sequence, 67 residues long: Conotoxin Lt5.9 (67 aa).

Residues 1-19 (MLCLPVFIILLLLASPAAP) form the signal peptide. A propeptide spanning residues 20 to 46 (KSFETKVQSDLTRTDGNMETEENLGEV) is cleaved from the precursor.

Belongs to the conotoxin T superfamily. Contains 2 disulfide bonds that can be either 'C1-C3, C2-C4' or 'C1-C4, C2-C3', since these disulfide connectivities have been observed for conotoxins with cysteine framework V (for examples, see AC P0DQQ7 and AC P81755). Expressed by the venom duct.

Its subcellular location is the secreted. This chain is Conotoxin Lt5.9, found in Conus litteratus (Lettered cone).